A 305-amino-acid chain; its full sequence is MIKQRTLKQSIKVTGVGLHSGEKVTLTLRPAMPNTGVVYYRTDLNPTVAFPADPNSVRDTMLCTALINEQGVRISTVEHLNAALAGLGIDNIIIEVDAPEIPIMDGSASPFIYLLLDAGIEEQNAAKKFIRIKEYVRVEDGDKWAEFKPYNGFRLDFTIDFDHPAIGKDVRNYEMNFSAQAFVHQISRARTFGFMKDIEYLQSQGLVLGGSLDNAIVLDDYRILNEDGLRFKDELVRHKMLDAIGDLYMAGYNIIGDFKAYKSGHGLNNKLLRAVLANQEAWEFVTFEDKEQVPQGYVAPAQVLI.

The Zn(2+) site is built by H79, H238, and D242. H265 (proton donor) is an active-site residue.

This sequence belongs to the LpxC family. Zn(2+) serves as cofactor.

It carries out the reaction a UDP-3-O-[(3R)-3-hydroxyacyl]-N-acetyl-alpha-D-glucosamine + H2O = a UDP-3-O-[(3R)-3-hydroxyacyl]-alpha-D-glucosamine + acetate. It participates in glycolipid biosynthesis; lipid IV(A) biosynthesis; lipid IV(A) from (3R)-3-hydroxytetradecanoyl-[acyl-carrier-protein] and UDP-N-acetyl-alpha-D-glucosamine: step 2/6. Its function is as follows. Catalyzes the hydrolysis of UDP-3-O-myristoyl-N-acetylglucosamine to form UDP-3-O-myristoylglucosamine and acetate, the committed step in lipid A biosynthesis. This is UDP-3-O-acyl-N-acetylglucosamine deacetylase from Haemophilus influenzae (strain PittEE).